An 83-amino-acid polypeptide reads, in one-letter code: Retinal cone rhodopsin-sensitive cGMP 3',5'-cyclic phosphodiesterase subunit gamma (83 aa).

Positions 1–17 (MSDNTVLAPPTSNQGPT) are enriched in polar residues. A disordered region spans residues 1–51 (MSDNTVLAPPTSNQGPTTPRKGPPKFKQRQTRQFKSKPPKKGVKGFGDDIP). Residues 22-43 (GPPKFKQRQTRQFKSKPPKKGV) show a composition bias toward basic residues.

Belongs to the rod/cone cGMP-PDE gamma subunit family. In terms of assembly, tetramer composed of two catalytic chains (alpha and beta), and two inhibitory chains (gamma).

The enzyme catalyses 3',5'-cyclic GMP + H2O = GMP + H(+). Functionally, participates in processes of transmission and amplification of the visual signal. cGMP-PDEs are the effector molecules in G-protein-mediated phototransduction in vertebrate rods and cones. The chain is Retinal cone rhodopsin-sensitive cGMP 3',5'-cyclic phosphodiesterase subunit gamma (PDE6H) from Bos taurus (Bovine).